Here is a 927-residue protein sequence, read N- to C-terminus: LPS-assembly protein LptD (927 aa).

Residues Met1–Ala22 form the signal peptide. Residues Leu60–Lys100 form a disordered region. The segment covering Ser70–Glu86 has biased composition (low complexity).

It belongs to the LptD family. As to quaternary structure, component of the lipopolysaccharide transport and assembly complex. Interacts with LptE and LptA.

Its subcellular location is the cell outer membrane. Functionally, together with LptE, is involved in the assembly of lipopolysaccharide (LPS) at the surface of the outer membrane. In Pseudomonas syringae pv. tomato (strain ATCC BAA-871 / DC3000), this protein is LPS-assembly protein LptD.